A 194-amino-acid chain; its full sequence is Protein GrpE (194 aa).

Positions methionine 1–glutamine 12 are enriched in polar residues. A disordered region spans residues methionine 1–glutamate 39.

It belongs to the GrpE family. In terms of assembly, homodimer.

It localises to the cytoplasm. Participates actively in the response to hyperosmotic and heat shock by preventing the aggregation of stress-denatured proteins, in association with DnaK and GrpE. It is the nucleotide exchange factor for DnaK and may function as a thermosensor. Unfolded proteins bind initially to DnaJ; upon interaction with the DnaJ-bound protein, DnaK hydrolyzes its bound ATP, resulting in the formation of a stable complex. GrpE releases ADP from DnaK; ATP binding to DnaK triggers the release of the substrate protein, thus completing the reaction cycle. Several rounds of ATP-dependent interactions between DnaJ, DnaK and GrpE are required for fully efficient folding. In Erwinia tasmaniensis (strain DSM 17950 / CFBP 7177 / CIP 109463 / NCPPB 4357 / Et1/99), this protein is Protein GrpE.